A 443-amino-acid polypeptide reads, in one-letter code: Major royal jelly protein 7 (443 aa).

An N-terminal signal peptide occupies residues 1–17; that stretch reads MTRWLFMVACLGIACQG. Asn-145, Asn-161, Asn-178, and Asn-321 each carry an N-linked (GlcNAc...) asparagine glycan.

Belongs to the major royal jelly protein family. As to expression, found in and secreted from the hypopharyngeal glands of the worker honey bee (at protein level); expression peaks at 12 days post eclosion. Expressed in the brains of adult worker bees peaking at 12 days post eclosion (at protein level). Expressed in the spermatheca of adult queen bees (at protein level); Expression levels are higher in mated queens than in virgin queens.

The protein localises to the secreted. Functionally, component of royal jelly, a substance produced in the hypopharyngeal gland containing proteins, free amino acids, fatty acids, sugars and other nutrients, which is fed to developing larvae by worker nurse bees. All larvae are fed some royal jelly (also known as worker jelly) early in their development but it forms the principal source of nutrition for larvae destined to become queen bees. Produced in the spermatheca of adult queen bees, along with other major royal jelly proteins, where it may act as a nutrient supply for sperm stored by mated queens, or be involved in energy metabolism. This Apis mellifera (Honeybee) protein is Major royal jelly protein 7.